A 554-amino-acid chain; its full sequence is Formate--tetrahydrofolate ligase (554 aa).

ATP is bound at residue 67-74 (TPTGEGKT).

This sequence belongs to the formate--tetrahydrofolate ligase family.

It carries out the reaction (6S)-5,6,7,8-tetrahydrofolate + formate + ATP = (6R)-10-formyltetrahydrofolate + ADP + phosphate. It participates in one-carbon metabolism; tetrahydrofolate interconversion. The chain is Formate--tetrahydrofolate ligase from Finegoldia magna (strain ATCC 29328 / DSM 20472 / WAL 2508) (Peptostreptococcus magnus).